The primary structure comprises 293 residues: Formamidopyrimidine-DNA glycosylase (293 aa).

Pro-2 serves as the catalytic Schiff-base intermediate with DNA. Residue Glu-3 is the Proton donor of the active site. Residue Lys-58 is the Proton donor; for beta-elimination activity of the active site. DNA contacts are provided by His-104, Arg-123, and Lys-166. An FPG-type zinc finger spans residues 257 to 293 (AVYDREGERCRTPGCNGTVKRLVQNGRSTFWCSGCQT). Arg-283 serves as the catalytic Proton donor; for delta-elimination activity.

This sequence belongs to the FPG family. In terms of assembly, monomer. It depends on Zn(2+) as a cofactor.

The catalysed reaction is Hydrolysis of DNA containing ring-opened 7-methylguanine residues, releasing 2,6-diamino-4-hydroxy-5-(N-methyl)formamidopyrimidine.. It carries out the reaction 2'-deoxyribonucleotide-(2'-deoxyribose 5'-phosphate)-2'-deoxyribonucleotide-DNA = a 3'-end 2'-deoxyribonucleotide-(2,3-dehydro-2,3-deoxyribose 5'-phosphate)-DNA + a 5'-end 5'-phospho-2'-deoxyribonucleoside-DNA + H(+). Its function is as follows. Involved in base excision repair of DNA damaged by oxidation or by mutagenic agents. Acts as a DNA glycosylase that recognizes and removes damaged bases. Has a preference for oxidized purines, such as 7,8-dihydro-8-oxoguanine (8-oxoG). Has AP (apurinic/apyrimidinic) lyase activity and introduces nicks in the DNA strand. Cleaves the DNA backbone by beta-delta elimination to generate a single-strand break at the site of the removed base with both 3'- and 5'-phosphates. The protein is Formamidopyrimidine-DNA glycosylase of Rhodopseudomonas palustris (strain HaA2).